The following is a 421-amino-acid chain: Histidine--tRNA ligase (421 aa).

The protein belongs to the class-II aminoacyl-tRNA synthetase family. Homodimer.

The protein localises to the cytoplasm. The catalysed reaction is tRNA(His) + L-histidine + ATP = L-histidyl-tRNA(His) + AMP + diphosphate + H(+). The chain is Histidine--tRNA ligase from Solidesulfovibrio magneticus (strain ATCC 700980 / DSM 13731 / RS-1) (Desulfovibrio magneticus).